A 195-amino-acid polypeptide reads, in one-letter code: Protein GrpE (195 aa).

Belongs to the GrpE family. In terms of assembly, homodimer.

It localises to the cytoplasm. In terms of biological role, participates actively in the response to hyperosmotic and heat shock by preventing the aggregation of stress-denatured proteins, in association with DnaK and GrpE. It is the nucleotide exchange factor for DnaK and may function as a thermosensor. Unfolded proteins bind initially to DnaJ; upon interaction with the DnaJ-bound protein, DnaK hydrolyzes its bound ATP, resulting in the formation of a stable complex. GrpE releases ADP from DnaK; ATP binding to DnaK triggers the release of the substrate protein, thus completing the reaction cycle. Several rounds of ATP-dependent interactions between DnaJ, DnaK and GrpE are required for fully efficient folding. This is Protein GrpE from Blochmanniella floridana.